A 1138-amino-acid chain; its full sequence is Transmembrane channel-like protein 3 (1138 aa).

Residues 1–15 (MEAAPGTAAAAAKPA) show a composition bias toward low complexity. 2 disordered regions span residues 1–20 (MEAAPGTAAAAAKPAKSCKK) and 29–54 (NIYTYQEPPHSNSDEDISEEKADSQD). Topologically, residues 1-155 (MEAAPGTAAA…VASYFIFLRW (155 aa)) are cytoplasmic. The chain crosses the membrane as a helical span at residues 156–176 (LFGINIVLTIMTGAFVVLPEL). Over 177 to 202 (LAGAPFGSTVSKTIRQEDLKTAQDLD) the chain is Extracellular. Residues 203–223 (TIWSLGGYLQYSVLFYGYYGS) traverse the membrane as a helical segment. The Cytoplasmic segment spans residues 224–233 (DRKIGKAGYR). The helical transmembrane segment at 234–254 (LPLAYFLVGMAVFAYSFIILL) threads the bilayer. The Extracellular segment spans residues 255–327 (KKMAKNSRMS…KNLAVTISLR (73 aa)). N-linked (GlcNAc...) asparagine glycosylation is present at Asn272. A helical transmembrane segment spans residues 328–348 (IIANILVLLSLTGSIYIIYFV). Residues 349 to 369 (VDRSQKLENNKRELTLWEKNE) are Cytoplasmic-facing. Residues 370-390 (VSVVVSLITMIAPSAFELVAA) form a helical membrane-spanning segment. At 391–401 (LEMYHPRTTLR) the chain is on the extracellular side. Residues 402-422 (FQLARVLVLYLGNLYSLIIAL) form a helical membrane-spanning segment. The Cytoplasmic segment spans residues 423 to 508 (LDKVNSMSVT…CWETYVGQEM (86 aa)). Residues 509–529 (LKLSIIDMIFTVASILLIDFF) form a helical membrane-spanning segment. Residues 530 to 569 (RGLCVRYLSDCWCWDLESKFPEYGEFKIAENVLHLVYNQG) lie on the Extracellular side of the membrane. A helical membrane pass occupies residues 570–590 (MIWMGAFFSPCLPAFNVLKLI). The Cytoplasmic segment spans residues 591–618 (GLMYLRSWAVLTCNVPHQQVFRASRSNN). Residues 619–639 (FYLAMLLFMLFLCMLPTIFAI) form a helical membrane-spanning segment. Residues 640 to 676 (ARYKPSLSCGPFSGQEKIYDIVSETIQNDFPAWFNSV) are Extracellular-facing. A helical membrane pass occupies residues 677 to 697 (IAYISSPVVVLPALLLLFMLI). At 698–1138 (YYLQSIARSL…EPNELVCSNV (441 aa)) the chain is on the cytoplasmic side. The segment covering 753–763 (NSEGTRFQSLD) has biased composition (polar residues). Disordered stretches follow at residues 753-859 (NSEG…RYPS), 973-1005 (SPHPSEDEEDEEALGRHYVKRSHRPRSLSDLRP), and 1065-1095 (PKTKHMLEQSLTESDSVSIESSSDPQNSSND). The segment covering 764-773 (GSDKRPDKDG) has biased composition (basic and acidic residues). Polar residues-rich tracts occupy residues 777–795 (SQESSVRASTPRKNGSVLN) and 804–813 (TRIQTISQTV). Low complexity predominate over residues 828 to 845 (TTPTTSASLTPAPSVSSA). Residues 989-998 (HYVKRSHRPR) are compositionally biased toward basic residues. The span at 1074–1095 (SLTESDSVSIESSSDPQNSSND) shows a compositional bias: low complexity.

It belongs to the TMC family. As to expression, expressed in a range of tissues including cerebrum, cerebellum, retina, cochlea, lung, liver and heart. Also expressed in the apical, medial and basal portions of the basillar papilla.

The protein resides in the membrane. Its function is as follows. Probable component of an ion channel. The polypeptide is Transmembrane channel-like protein 3 (Gallus gallus (Chicken)).